A 968-amino-acid polypeptide reads, in one-letter code: RNA polymerase-associated protein RapA (968 aa).

The Helicase ATP-binding domain maps to 163-332 (EVGRRYAPRV…FARLRLLDPD (170 aa)). Position 176–183 (176–183 (DEVGLGKT)) interacts with ATP. A DEAH box motif is present at residues 278–281 (DEAH). The Helicase C-terminal domain occupies 491-641 (RVDWLIAFLK…AFELTCPSGH (151 aa)).

It belongs to the SNF2/RAD54 helicase family. RapA subfamily. In terms of assembly, interacts with the RNAP. Has a higher affinity for the core RNAP than for the holoenzyme. Its ATPase activity is stimulated by binding to RNAP.

In terms of biological role, transcription regulator that activates transcription by stimulating RNA polymerase (RNAP) recycling in case of stress conditions such as supercoiled DNA or high salt concentrations. Probably acts by releasing the RNAP, when it is trapped or immobilized on tightly supercoiled DNA. Does not activate transcription on linear DNA. Probably not involved in DNA repair. In Shewanella denitrificans (strain OS217 / ATCC BAA-1090 / DSM 15013), this protein is RNA polymerase-associated protein RapA.